Here is a 737-residue protein sequence, read N- to C-terminus: Oligopeptide transporter 3 (737 aa).

16 helical membrane passes run 45–65 (AWFL…FFTY), 69–89 (PLTI…KFMA), 117–137 (VIIT…AYSI), 153–173 (FICG…WAGI), 215–235 (FLVA…LFPI), 255–275 (VGSG…AGIS), 289–309 (ILNV…VCYW), 357–377 (LYLS…FTAT), 418–438 (WWFY…SFVW), 446–466 (WWGM…IGVI), 478–498 (IIGQ…NLIF), 532–552 (AQLV…WWML), 604–624 (VWLF…SKIF), 629–649 (WIPL…PPAT), 650–670 (PTNI…VFNY), and 681–701 (VLSA…FFAL).

It belongs to the oligopeptide OPT transporter (TC 2.A.67.1) family. As to expression, strong expression in flowers, leaves and roots. Preferentially expressed in the vascular tissues of seedlings and mature plants as well as in pollen and developing embryos.

It is found in the membrane. Its function is as follows. May be involved in the translocation of tetra- and pentapeptides across the cellular membrane in an energy-dependent manner. Also acts as a metal transporter that could be a component of the copper transport machinery. Essential for early embryo development. This Arabidopsis thaliana (Mouse-ear cress) protein is Oligopeptide transporter 3 (OPT3).